A 357-amino-acid chain; its full sequence is NmrA-like family domain-containing oxidoreductase notA' (357 aa).

NADP(+) is bound by residues 13-18 (GATGAQ), 39-43 (RKPES), 60-61 (DG), 81-83 (TNS), Lys-140, and 164-167 (YMDV).

The protein belongs to the NmrA-type oxidoreductase family.

NmrA-like family domain-containing oxidoreductase; part of the gene cluster that mediates the biosynthesis of notoamide, a fungal indole alkaloid that belongs to a family of natural products containing a characteristic bicyclo[2.2.2]diazaoctane core. The first step of notoamide biosynthesis involves coupling of L-proline and L-tryptophan by the bimodular NRPS notE', to produce cyclo-L-tryptophan-L-proline called brevianamide F. The reverse prenyltransferase notF' then acts as a deoxybrevianamide E synthase and converts brevianamide F to deoxybrevianamide E via reverse prenylation at C-2 of the indole ring leading to the bicyclo[2.2.2]diazaoctane core. Deoxybrevianamide E is further hydroxylated at C-6 of the indole ring, likely catalyzed by the cytochrome P450 monooxygenase notG', to yield 6-hydroxy-deoxybrevianamide E. 6-hydroxy-deoxybrevianamide E is a specific substrate of the prenyltransferase notC' for normal prenylation at C-7 to produce 6-hydroxy-7-prenyl-deoxybrevianamide, also called notoamide S. As the proposed pivotal branching point in notoamide biosynthesis, notoamide S can be diverted to notoamide E through an oxidative pyran ring closure putatively catalyzed by either notH' cytochrome P450 monooxygenase or the notD' FAD-linked oxidoreductase. This step would be followed by an indole 2,3-epoxidation-initiated pinacol-like rearrangement catalyzed by the notB' FAD-dependent monooxygenase leading to the formation of notoamide C and notoamide D. On the other hand notoamide S is converted to notoamide T by notH' (or notD'), a bifunctional oxidase that also functions as the intramolecular Diels-Alderase responsible for generation of (-)-notoamide T. To generate antipodal (+)-notoaminide T, notH (or notD) in Aspergillus strain MF297-2 is expected to catalyze a Diels-Alder reaction leading to the opposite stereochemistry. The remaining oxidoreductase notD' (or notH') likely catalyzes the oxidative pyran ring formation to yield (-)-stephacidin A. The FAD-dependent monooxygenase notI' is highly similar to notB' and is predicted to catalyze a similar conversion from (-)-stephacidin A to (+)-notoamide B via the 2,3-epoxidation of (-)-stephacidin A followed by a pinacol-type rearrangement. Finally, it remains unclear which enzyme could be responsible for the final hydroxylation steps leading to notoamide A and sclerotiamide. This is NmrA-like family domain-containing oxidoreductase notA' from Aspergillus versicolor.